The following is a 163-amino-acid chain: Translation initiation factor IF-3-like (163 aa).

Belongs to the IF-3 family.

The chain is Translation initiation factor IF-3-like from Nostoc sp. (strain PCC 7120 / SAG 25.82 / UTEX 2576).